A 392-amino-acid polypeptide reads, in one-letter code: Dual-specificity RNA methyltransferase RlmN (392 aa).

Glutamate 115 serves as the catalytic Proton acceptor. The Radical SAM core domain maps to 121–358 (EVDRGTLCIS…YKAGYASPIR (238 aa)). Cysteines 128 and 369 form a disulfide. Residues cysteine 135, cysteine 139, and cysteine 142 each coordinate [4Fe-4S] cluster. Residues 195–196 (GE), serine 227, 249–251 (SFH), and asparagine 326 contribute to the S-adenosyl-L-methionine site. Catalysis depends on cysteine 369, which acts as the S-methylcysteine intermediate.

It belongs to the radical SAM superfamily. RlmN family. Requires [4Fe-4S] cluster as cofactor.

It localises to the cytoplasm. The enzyme catalyses adenosine(2503) in 23S rRNA + 2 reduced [2Fe-2S]-[ferredoxin] + 2 S-adenosyl-L-methionine = 2-methyladenosine(2503) in 23S rRNA + 5'-deoxyadenosine + L-methionine + 2 oxidized [2Fe-2S]-[ferredoxin] + S-adenosyl-L-homocysteine. It carries out the reaction adenosine(37) in tRNA + 2 reduced [2Fe-2S]-[ferredoxin] + 2 S-adenosyl-L-methionine = 2-methyladenosine(37) in tRNA + 5'-deoxyadenosine + L-methionine + 2 oxidized [2Fe-2S]-[ferredoxin] + S-adenosyl-L-homocysteine. Its function is as follows. Specifically methylates position 2 of adenine 2503 in 23S rRNA and position 2 of adenine 37 in tRNAs. m2A2503 modification seems to play a crucial role in the proofreading step occurring at the peptidyl transferase center and thus would serve to optimize ribosomal fidelity. The protein is Dual-specificity RNA methyltransferase RlmN of Jannaschia sp. (strain CCS1).